A 268-amino-acid polypeptide reads, in one-letter code: Protein CDV3 homolog (268 aa).

Over residues 40-50 the composition is skewed to basic and acidic residues; the sequence is KREVVKPKKPE. 2 disordered regions span residues 40–145 and 184–268; these read KREV…ERVG and QQAG…DEAS. Over residues 51–61 the composition is skewed to low complexity; that stretch reads AAAGGVAVVGE. The segment covering 76 to 85 has biased composition (acidic residues); that stretch reads VEEEWKEFEE. Polar residues predominate over residues 98–107; that stretch reads QLSTITAQES. A compositionally biased stretch (acidic residues) spans 123–132; the sequence is NYDEDDEDSN. Basic and acidic residues predominate over residues 221-239; the sequence is RPEEQRKKKNEPAFEEVRH.

The protein belongs to the CDV3 family.

This Drosophila yakuba (Fruit fly) protein is Protein CDV3 homolog.